Reading from the N-terminus, the 118-residue chain is Small ribosomal subunit protein uS13 (118 aa).

The disordered stretch occupies residues 94 to 118 (GLPLRGQRTRTNARTRKGPRKAIRK).

The protein belongs to the universal ribosomal protein uS13 family. In terms of assembly, part of the 30S ribosomal subunit. Forms a loose heterodimer with protein S19. Forms two bridges to the 50S subunit in the 70S ribosome.

In terms of biological role, located at the top of the head of the 30S subunit, it contacts several helices of the 16S rRNA. In the 70S ribosome it contacts the 23S rRNA (bridge B1a) and protein L5 of the 50S subunit (bridge B1b), connecting the 2 subunits; these bridges are implicated in subunit movement. Contacts the tRNAs in the A and P-sites. The sequence is that of Small ribosomal subunit protein uS13 from Stenotrophomonas maltophilia (strain R551-3).